Consider the following 33-residue polypeptide: Photosystem II reaction center protein Psb30 (33 aa).

The helical transmembrane segment at 5-25 threads the bilayer; the sequence is LIVQLGSLTLITLAGPLVVVL.

The protein belongs to the Psb30/Ycf12 family. PSII is composed of 1 copy each of membrane proteins PsbA, PsbB, PsbC, PsbD, PsbE, PsbF, PsbH, PsbI, PsbJ, PsbK, PsbL, PsbM, PsbT, PsbY, PsbZ, Psb30/Ycf12, peripheral proteins of the oxygen-evolving complex and a large number of cofactors. It forms dimeric complexes.

Its subcellular location is the plastid. It is found in the chloroplast thylakoid membrane. Functionally, a core subunit of photosystem II (PSII), probably helps stabilize the reaction center. This Euglena deses protein is Photosystem II reaction center protein Psb30.